Reading from the N-terminus, the 427-residue chain is Glutamate-1-semialdehyde 2,1-aminomutase (427 aa).

Lys265 carries the post-translational modification N6-(pyridoxal phosphate)lysine.

It belongs to the class-III pyridoxal-phosphate-dependent aminotransferase family. HemL subfamily. In terms of assembly, homodimer. It depends on pyridoxal 5'-phosphate as a cofactor.

It localises to the cytoplasm. The enzyme catalyses (S)-4-amino-5-oxopentanoate = 5-aminolevulinate. Its pathway is porphyrin-containing compound metabolism; protoporphyrin-IX biosynthesis; 5-aminolevulinate from L-glutamyl-tRNA(Glu): step 2/2. The polypeptide is Glutamate-1-semialdehyde 2,1-aminomutase (Burkholderia multivorans (strain ATCC 17616 / 249)).